Consider the following 147-residue polypeptide: D-aminoacyl-tRNA deacylase (147 aa).

The Gly-cisPro motif, important for rejection of L-amino acids motif lies at Gly-136–Pro-137.

This sequence belongs to the DTD family. In terms of assembly, homodimer.

It localises to the cytoplasm. It carries out the reaction glycyl-tRNA(Ala) + H2O = tRNA(Ala) + glycine + H(+). The enzyme catalyses a D-aminoacyl-tRNA + H2O = a tRNA + a D-alpha-amino acid + H(+). An aminoacyl-tRNA editing enzyme that deacylates mischarged D-aminoacyl-tRNAs. Also deacylates mischarged glycyl-tRNA(Ala), protecting cells against glycine mischarging by AlaRS. Acts via tRNA-based rather than protein-based catalysis; rejects L-amino acids rather than detecting D-amino acids in the active site. By recycling D-aminoacyl-tRNA to D-amino acids and free tRNA molecules, this enzyme counteracts the toxicity associated with the formation of D-aminoacyl-tRNA entities in vivo and helps enforce protein L-homochirality. This Streptococcus pyogenes serotype M6 (strain ATCC BAA-946 / MGAS10394) protein is D-aminoacyl-tRNA deacylase.